The sequence spans 165 residues: Destrin (165 aa).

Residue Ala-2 is modified to N-acetylalanine. Residue Ser-3 is modified to Phosphoserine. In terms of domain architecture, ADF-H spans 4–153; the sequence is GVQVADEVCR…NRTSIAEKLG (150 aa). Lys-19 bears the N6-acetyllysine mark. Residues 30–34 carry the Nuclear localization signal motif; it reads KKRKK.

It belongs to the actin-binding proteins ADF family. In terms of processing, ISGylated.

In terms of biological role, actin-depolymerizing protein. Severs actin filaments (F-actin) and binds to actin monomers (G-actin). Acts in a pH-independent manner. The polypeptide is Destrin (Dstn) (Rattus norvegicus (Rat)).